The following is a 42-amino-acid chain: Tachystatin-B1 (42 aa).

3 disulfide bridges follow: cysteine 4–cysteine 20, cysteine 11–cysteine 25, and cysteine 19–cysteine 37.

Granular hemocytes, small secretory granules.

The protein resides in the secreted. Exhibits stronger antimicrobial activity against the Gram-positive bacteria (S.aureus (IC(50) is 7.4 ug/ml)) and fungi (C.albicans (IC(50) is 3.0 ug/ml) and P.pastoris (IC(50) is 0.1 ug/ml)) than Gram-negative bacteria (E.coli no inhibition at 100 ug/ml). Binds to chitin (4.3 uM are required to obtain 50% of binding). Does not cause hemolysis on sheep erythrocytes. Has no blocking activity on the P-type calcium channel. This chain is Tachystatin-B1, found in Tachypleus tridentatus (Japanese horseshoe crab).